Reading from the N-terminus, the 216-residue chain is Ras-related protein YPTC6 (216 aa).

GTP is bound at residue G19–S26. Residues S41–F49 carry the Effector region motif. GTP is bound by residues D67–Q71 and N125–D128. Residues C214 and C215 are each lipidated (S-geranylgeranyl cysteine).

It belongs to the small GTPase superfamily. Rab family.

Its subcellular location is the cell membrane. In Chlamydomonas reinhardtii (Chlamydomonas smithii), this protein is Ras-related protein YPTC6 (YPTC6).